The chain runs to 468 residues: UDP-N-acetylmuramate--L-alanine ligase (468 aa).

121–127 (GSHGKTT) contacts ATP.

The protein belongs to the MurCDEF family.

It is found in the cytoplasm. The catalysed reaction is UDP-N-acetyl-alpha-D-muramate + L-alanine + ATP = UDP-N-acetyl-alpha-D-muramoyl-L-alanine + ADP + phosphate + H(+). It participates in cell wall biogenesis; peptidoglycan biosynthesis. Cell wall formation. This is UDP-N-acetylmuramate--L-alanine ligase from Borreliella afzelii (strain PKo) (Borrelia afzelii).